Reading from the N-terminus, the 529-residue chain is Peptide chain release factor 3 (529 aa).

The tr-type G domain maps to 11–280 (NKRRTFAIIS…GLTKWAPTPL (270 aa)). GTP contacts are provided by residues 20 to 27 (SHPDAGKT), 88 to 92 (DTPGH), and 142 to 145 (NKCD).

The protein belongs to the TRAFAC class translation factor GTPase superfamily. Classic translation factor GTPase family. PrfC subfamily.

The protein resides in the cytoplasm. In terms of biological role, increases the formation of ribosomal termination complexes and stimulates activities of RF-1 and RF-2. It binds guanine nucleotides and has strong preference for UGA stop codons. It may interact directly with the ribosome. The stimulation of RF-1 and RF-2 is significantly reduced by GTP and GDP, but not by GMP. This Pseudoalteromonas translucida (strain TAC 125) protein is Peptide chain release factor 3.